The primary structure comprises 34 residues: Cytochrome b6-f complex subunit 8 (34 aa).

Residues 3-23 (LLTFGWAALLAVFTFSLAMVV) traverse the membrane as a helical segment.

This sequence belongs to the PetN family. The 4 large subunits of the cytochrome b6-f complex are cytochrome b6, subunit IV (17 kDa polypeptide, PetD), cytochrome f and the Rieske protein, while the 4 small subunits are PetG, PetL, PetM and PetN. The complex functions as a dimer.

Its subcellular location is the cellular thylakoid membrane. In terms of biological role, component of the cytochrome b6-f complex, which mediates electron transfer between photosystem II (PSII) and photosystem I (PSI), cyclic electron flow around PSI, and state transitions. This Synechococcus elongatus (strain ATCC 33912 / PCC 7942 / FACHB-805) (Anacystis nidulans R2) protein is Cytochrome b6-f complex subunit 8.